We begin with the raw amino-acid sequence, 65 residues long: Large ribosomal subunit protein uL30 (65 aa).

It belongs to the universal ribosomal protein uL30 family. Part of the 50S ribosomal subunit.

This Aster yellows witches'-broom phytoplasma (strain AYWB) protein is Large ribosomal subunit protein uL30.